Consider the following 431-residue polypeptide: MQLNSNGWHVDDHIVVAVSTGIDSMCLLYQLLNDYKDSYRKLTCLHVNHGVRSASIEEARFLEAYCERHHIDLHIKKLDLSHSLDRNNSIQNEARIKRYEWFDEMMNVLEADVLLTAHHLDDQLETIMYRIFNGKSTRNKLGFDELSKRKGYQIYRPLLAVSKKEIKQFQERYHIPYFEDESNKDNKYIRNDIRNRIIPAIDENNQLKVSHLLKLKQWHDEQYDILQYSAKQFIQEFVKFDEQSKYLEVSRQAFNNLPNSLKMVVLDCLLSKYYELFNISAKTYEEWFKQFSSKKAQFSINLTDKWIIQIAYGKLIIMAKNNGDTYFRVQTIKKPGNYFFNKYRLEIHSNLPKCLFPLTVRTRQSGDTFKLNGRDGYKKVNRLFIDCKVPQWVRDQMPIVLDKQQRIIAVGDLYQQQTIKKWIIISKNGDE.

19 to 24 (STGIDS) provides a ligand contact to ATP.

Belongs to the tRNA(Ile)-lysidine synthase family.

It is found in the cytoplasm. The catalysed reaction is cytidine(34) in tRNA(Ile2) + L-lysine + ATP = lysidine(34) in tRNA(Ile2) + AMP + diphosphate + H(+). Ligates lysine onto the cytidine present at position 34 of the AUA codon-specific tRNA(Ile) that contains the anticodon CAU, in an ATP-dependent manner. Cytidine is converted to lysidine, thus changing the amino acid specificity of the tRNA from methionine to isoleucine. This is tRNA(Ile)-lysidine synthase from Staphylococcus aureus (strain Mu50 / ATCC 700699).